Here is a 201-residue protein sequence, read N- to C-terminus: Recombination protein RecR (201 aa).

The segment at 57–72 (CADCRTFTEQDICTIC) adopts a C4-type zinc-finger fold. The Toprim domain maps to 81–176 (GQICVVESPA…VASRIAHGVP (96 aa)).

The protein belongs to the RecR family.

Its function is as follows. May play a role in DNA repair. It seems to be involved in an RecBC-independent recombinational process of DNA repair. It may act with RecF and RecO. This Serratia proteamaculans (strain 568) protein is Recombination protein RecR.